Reading from the N-terminus, the 558-residue chain is MGPPKNFKHFSKSNKHKKEQKALITQEDFYLAAIDCEEQADRWLLSDIKKCLRFYLKALEHYENGLTALDSTQEGKYNIYYNETRLFLQIYTDYLANNGYINILQYVKMDDMPDLSNLVLSLPQIIQRFEIVYETFPEQRTWDLQFNLLTCYLTLIESLDDTVSPTVAMEGADILTLTNKYIEIFQHLVNYLLQELQNWSENAEQDSDDTDTELQRDTLDEDAMQVTRDGSGIRTNGPVQPPAEVMDVSEQVTPSSLTEVLANSLKFNHALMELVIESKISIEKNVETKILNPIQINFLEDTTNKFYLQLRDIIDSISAAIPLDLKEIGLAKTLIEGLNIISSGTFESLQDFVLQTVSFTDLLDEKDVQGKIDLSLIRVDIVEFAILCLNDYSSDASWKLSGLLTKVLTEARTLLTDYRNQILFLKNQTLNEQLSHVVFQLCDVLVNSSDNELRRYAIKESTEKSQKTPGGAHTLNILMKNANVFLNNAVAISSKQCGLQETIIDKLKRNYIHNQAKERLLFLQRLEQKSNEDDGTSASPTAMTFDMPPEHPFYSHYR.

Positions 531-558 (NEDDGTSASPTAMTFDMPPEHPFYSHYR) are disordered.

This is an uncharacterized protein from Saccharomyces cerevisiae (strain ATCC 204508 / S288c) (Baker's yeast).